Here is a 57-residue protein sequence, read N- to C-terminus: Large ribosomal subunit protein eL20 (57 aa).

This sequence belongs to the eukaryotic ribosomal protein eL20 family. Part of the 50S ribosomal subunit. Binds 23S rRNA.

This Archaeoglobus fulgidus (strain ATCC 49558 / DSM 4304 / JCM 9628 / NBRC 100126 / VC-16) protein is Large ribosomal subunit protein eL20.